A 201-amino-acid chain; its full sequence is LIM domain-containing protein PLIM2b (201 aa).

LIM zinc-binding domains follow at residues aspartate 8–glutamate 68 and aspartate 103–glutamate 163. The tract at residues lysine 171–asparagine 201 is disordered. Residues glutamine 177–glutamate 187 are compositionally biased toward low complexity.

As to quaternary structure, interacts with NEK3.

The sequence is that of LIM domain-containing protein PLIM2b from Oryza sativa subsp. japonica (Rice).